Reading from the N-terminus, the 98-residue chain is Large ribosomal subunit protein uL23 (98 aa).

Belongs to the universal ribosomal protein uL23 family. As to quaternary structure, part of the 50S ribosomal subunit. Contacts protein L29, and trigger factor when it is bound to the ribosome.

Functionally, one of the early assembly proteins it binds 23S rRNA. One of the proteins that surrounds the polypeptide exit tunnel on the outside of the ribosome. Forms the main docking site for trigger factor binding to the ribosome. In Bifidobacterium longum (strain DJO10A), this protein is Large ribosomal subunit protein uL23.